The primary structure comprises 874 residues: Protein translocase subunit SecA (874 aa).

Residues glutamine 85, 103-107 (GEGKT), and aspartate 492 contribute to the ATP site. Basic and acidic residues predominate over residues 839–854 (EEGPKKPYRREQKIGR). Residues 839–864 (EEGPKKPYRREQKIGRNDPCPCGSGK) form a disordered region. Zn(2+)-binding residues include cysteine 858, cysteine 860, cysteine 869, and cysteine 870.

Belongs to the SecA family. As to quaternary structure, monomer and homodimer. Part of the essential Sec protein translocation apparatus which comprises SecA, SecYEG and auxiliary proteins SecDF. Other proteins may also be involved. Requires Zn(2+) as cofactor.

It localises to the cell membrane. It is found in the cytoplasm. It catalyses the reaction ATP + H2O + cellular proteinSide 1 = ADP + phosphate + cellular proteinSide 2.. Functionally, part of the Sec protein translocase complex. Interacts with the SecYEG preprotein conducting channel. Has a central role in coupling the hydrolysis of ATP to the transfer of proteins into and across the cell membrane, serving as an ATP-driven molecular motor driving the stepwise translocation of polypeptide chains across the membrane. This Carboxydothermus hydrogenoformans (strain ATCC BAA-161 / DSM 6008 / Z-2901) protein is Protein translocase subunit SecA.